Reading from the N-terminus, the 432-residue chain is Trigger factor (432 aa).

The PPIase FKBP-type domain occupies 161-246 (DDRVTIDFVG…LKKIENMVLP (86 aa)).

Belongs to the FKBP-type PPIase family. Tig subfamily.

The protein localises to the cytoplasm. It carries out the reaction [protein]-peptidylproline (omega=180) = [protein]-peptidylproline (omega=0). In terms of biological role, involved in protein export. Acts as a chaperone by maintaining the newly synthesized protein in an open conformation. Functions as a peptidyl-prolyl cis-trans isomerase. This chain is Trigger factor, found in Haemophilus influenzae (strain 86-028NP).